The following is a 266-amino-acid chain: Large ribosomal subunit protein uL2m (266 aa).

This sequence belongs to the universal ribosomal protein uL2 family.

The protein localises to the mitochondrion. This is Large ribosomal subunit protein uL2m (mrpl2) from Dictyostelium citrinum (Slime mold).